The sequence spans 300 residues: Sodium/potassium/calcium exchanger 1 (300 aa).

Residues 1 to 251 form a disordered region; it reads DPGSQGVGAE…ENEQPLSLEW (251 aa). 5 stretches are compositionally biased toward acidic residues: residues 92–102, 109–119, 126–136, 158–175, and 215–244; these read GEVEGDEDEGE, GEVEGEDGEVEGGEDEGE, and GDSEDEEEEDEEEDEEEEEEEEEEEEEENE. The chain crosses the membrane as a helical span at residues 259–275; sequence AIYLFLLPIVFPLWLTV.

The protein belongs to the Ca(2+):cation antiporter (CaCA) (TC 2.A.19) family. SLC24A subfamily. In terms of processing, the uncleaved signal sequence is required for efficient membrane targeting and proper membrane integration and topology.

The protein localises to the cell membrane. The enzyme catalyses Ca(2+)(out) + K(+)(out) + 4 Na(+)(in) = Ca(2+)(in) + K(+)(in) + 4 Na(+)(out). Its function is as follows. Calcium, potassium:sodium antiporter that transports 1 Ca(2+) and 1 K(+) in exchange for 4 Na(+). Critical component of the visual transduction cascade, controlling the calcium concentration of outer segments during light and darkness. Light causes a rapid lowering of cytosolic free calcium in the outer segment of both retinal rod and cone photoreceptors and the light-induced lowering of calcium is caused by extrusion via this protein which plays a key role in the process of light adaptation. This is Sodium/potassium/calcium exchanger 1 (SLC24A1) from Bison bison (American bison).